The following is a 237-amino-acid chain: Putative exosome complex component rrp40 (237 aa).

The region spanning 67-137 (EDMVIGTIIE…EPEVVCLSQK (71 aa)) is the S1 motif domain.

Belongs to the RRP40 family. Component of the RNA exosome complex.

The protein localises to the cytoplasm. It localises to the nucleus. It is found in the nucleolus. Its function is as follows. Non-catalytic component of the RNA exosome complex which has 3'-&gt;5' exoribonuclease activity and participates in a multitude of cellular RNA processing and degradation events. This is Putative exosome complex component rrp40 (exosc3) from Dictyostelium discoideum (Social amoeba).